The chain runs to 274 residues: Thiamine kinase (274 aa).

This sequence belongs to the thiamine kinase family.

The catalysed reaction is thiamine + ATP = thiamine phosphate + ADP + H(+). Its pathway is cofactor biosynthesis; thiamine diphosphate biosynthesis; thiamine phosphate from thiamine: step 1/1. In terms of biological role, catalyzes the ATP-dependent phosphorylation of thiamine to thiamine phosphate. Is involved in thiamine salvage. This chain is Thiamine kinase, found in Escherichia coli O139:H28 (strain E24377A / ETEC).